Here is a 169-residue protein sequence, read N- to C-terminus: MTRRRERGQQPVGTRRAAREFAFRVLFEAERGKLPLETVFTRAEGDMREGDDTFAQLNAEALAFARQLVDGLGERRADVDAALRRTIRGWDFEQMAQTDLNVLRLATYEMLYTPEPHPPVIESAVRIARKFGGEDSGRFVNGVLGGLSRSLKTAPRLPQNTGAEDGPQE.

This sequence belongs to the NusB family.

In terms of biological role, involved in transcription antitermination. Required for transcription of ribosomal RNA (rRNA) genes. Binds specifically to the boxA antiterminator sequence of the ribosomal RNA (rrn) operons. The chain is Transcription antitermination protein NusB from Deinococcus geothermalis (strain DSM 11300 / CIP 105573 / AG-3a).